We begin with the raw amino-acid sequence, 260 residues long: 23S rRNA (guanosine-2'-O-)-methyltransferase RlmB (260 aa).

S-adenosyl-L-methionine-binding residues include Gly197, Ile217, and Leu226.

The protein belongs to the class IV-like SAM-binding methyltransferase superfamily. RNA methyltransferase TrmH family. RlmB subfamily.

The protein localises to the cytoplasm. It carries out the reaction guanosine(2251) in 23S rRNA + S-adenosyl-L-methionine = 2'-O-methylguanosine(2251) in 23S rRNA + S-adenosyl-L-homocysteine + H(+). In terms of biological role, specifically methylates the ribose of guanosine 2251 in 23S rRNA. The sequence is that of 23S rRNA (guanosine-2'-O-)-methyltransferase RlmB from Nitrosomonas europaea (strain ATCC 19718 / CIP 103999 / KCTC 2705 / NBRC 14298).